The sequence spans 472 residues: Poly(A) polymerase catalytic subunit (472 aa).

Catalysis depends on residues aspartate 194 and aspartate 196.

It belongs to the poxviridae poly(A) polymerase catalytic subunit family. In terms of assembly, heterodimer of a large (catalytic) subunit and a small (regulatory) subunit.

It catalyses the reaction RNA(n) + ATP = RNA(n)-3'-adenine ribonucleotide + diphosphate. In terms of biological role, polymerase that creates the 3'-poly(A) tail of mRNA's. The sequence is that of Poly(A) polymerase catalytic subunit (PAPL) from Serinus (CNPV).